Consider the following 500-residue polypeptide: Na(+)/H(+) antiporter NhaB (500 aa).

The next 12 helical transmembrane spans lie at 28–50, 68–88, 98–118, 121–141, 145–165, 205–225, 244–264, 311–331, 350–370, 394–414, 449–469, and 477–497; these read FLLL…VLVG, GGLL…ALYA, LLLM…LLLF, LLLG…LAAL, FLDA…FFAV, LLMH…VGEP, QVAP…VLLE, VLIV…LLVI, FQEA…VAVI, MLFI…VATI, VATP…IAPL, and MVWM…WAVS.

Belongs to the NhaB Na(+)/H(+) (TC 2.A.34) antiporter family.

It is found in the cell inner membrane. The catalysed reaction is 2 Na(+)(in) + 3 H(+)(out) = 2 Na(+)(out) + 3 H(+)(in). Functionally, na(+)/H(+) antiporter that extrudes sodium in exchange for external protons. In Pseudomonas aeruginosa (strain LESB58), this protein is Na(+)/H(+) antiporter NhaB.